The following is a 138-amino-acid chain: Basic phospholipase A2 homolog Vur-S49 (138 aa).

The signal sequence occupies residues 1 to 16 (MRALWIVAVCLIGVEG). Disulfide bonds link Cys-42–Cys-131, Cys-44–Cys-60, Cys-59–Cys-111, Cys-65–Cys-138, Cys-66–Cys-104, Cys-73–Cys-97, and Cys-91–Cys-102. The interval 121–133 (KKYKVYLRFKCKG) is important for membrane-damaging activities in eukaryotes and bacteria; heparin-binding.

It belongs to the phospholipase A2 family. Group II subfamily. S49 sub-subfamily. As to expression, expressed by the venom gland.

It localises to the secreted. Snake venom phospholipase A2 homolog that lacks enzymatic activity. Is able to suppress the acetylcholine (ACh)-evoked current mediated by alpha-7 (CHRNA7)-similar nAChRs in L.stagnalis neurons (IC(50)=2.18 uM). This activity is only partially reversible and seems to be non-competitive. This chain is Basic phospholipase A2 homolog Vur-S49, found in Vipera renardi (Steppe viper).